A 344-amino-acid chain; its full sequence is Melanocyte-stimulating hormone receptor (344 aa).

Residues 1–37 are Extracellular-facing; that stretch reads MPMQGAQRKLLGSLNSTPTATSNLGLAANHTGAPCLE. Residue Asn-29 is glycosylated (N-linked (GlcNAc...) asparagine). Residues 38–63 traverse the membrane as a helical segment; the sequence is VPIPDGLFLSLGLVSLVENVLVVAAI. Topologically, residues 64–72 are cytoplasmic; the sequence is AKNRNLHSS. Residues 73–93 form a helical membrane-spanning segment; the sequence is MYCFICCLAVSDLLVSGSNML. The Extracellular portion of the chain corresponds to 94–118; the sequence is ETAIILLLEAGALVTRASVVQQLHN. The helical transmembrane segment at 119 to 140 threads the bilayer; sequence TIDVLTCSSMLCSLCFLGAIAV. Topologically, residues 141–163 are cytoplasmic; it reads DRYISIFYALRYHSIMTLPRAQR. The helical transmembrane segment at 164–183 threads the bilayer; that stretch reads AIAAIWVASVLSSTLFITYY. The Extracellular portion of the chain corresponds to 184–191; the sequence is DHAAVLLC. A helical transmembrane segment spans residues 192-211; it reads LVVFFLAMLVLMAVLYVHML. At 212 to 240 the chain is on the cytoplasmic side; that stretch reads ARACQHAQGIIRLHKRQPPAHKGFGLRGA. A helical membrane pass occupies residues 241 to 266; it reads ATLTILLGIFFLCWGPFFLHLTLVVF. Over 267-279 the chain is Extracellular; the sequence is CPQHMTCSCIFKN. Residues 280-300 form a helical membrane-spanning segment; sequence FKVFLTLIICNTIIDPLIYAF. The Cytoplasmic segment spans residues 301 to 344; it reads RSQELRRTLKEVLLCSRWPGCWAEGGGDSVWPGSCVTLRGPLPP. Cys-315 carries the S-palmitoyl cysteine lipid modification.

This sequence belongs to the G-protein coupled receptor 1 family. As to quaternary structure, interacts with MGRN1, but does not undergo MGRN1-mediated ubiquitination; this interaction competes with GNAS-binding and thus inhibits agonist-induced cAMP production. Interacts with OPN3; the interaction results in a decrease in MC1R-mediated cAMP signaling and ultimately a decrease in melanin production in melanocytes.

Its subcellular location is the cell membrane. Functionally, receptor for MSH (alpha, beta and gamma) and ACTH. The activity of this receptor is mediated by G proteins which activate adenylate cyclase. Mediates melanogenesis, the production of eumelanin (black/brown) and phaeomelanin (red/yellow), via regulation of cAMP signaling in melanocytes. In Callimico goeldii (Goeldi's marmoset), this protein is Melanocyte-stimulating hormone receptor (MC1R).